A 136-amino-acid polypeptide reads, in one-letter code: Large ribosomal subunit protein uL22 (136 aa).

The protein belongs to the universal ribosomal protein uL22 family. As to quaternary structure, part of the 50S ribosomal subunit.

Functionally, this protein binds specifically to 23S rRNA; its binding is stimulated by other ribosomal proteins, e.g. L4, L17, and L20. It is important during the early stages of 50S assembly. It makes multiple contacts with different domains of the 23S rRNA in the assembled 50S subunit and ribosome. The globular domain of the protein is located near the polypeptide exit tunnel on the outside of the subunit, while an extended beta-hairpin is found that lines the wall of the exit tunnel in the center of the 70S ribosome. This is Large ribosomal subunit protein uL22 from Bacteroides fragilis (strain ATCC 25285 / DSM 2151 / CCUG 4856 / JCM 11019 / LMG 10263 / NCTC 9343 / Onslow / VPI 2553 / EN-2).